A 370-amino-acid chain; its full sequence is Alanine racemase (370 aa).

Residue K39 is the Proton acceptor; specific for D-alanine of the active site. At K39 the chain carries N6-(pyridoxal phosphate)lysine. R137 provides a ligand contact to substrate. The active-site Proton acceptor; specific for L-alanine is Y258. M306 provides a ligand contact to substrate.

Belongs to the alanine racemase family. Requires pyridoxal 5'-phosphate as cofactor.

The enzyme catalyses L-alanine = D-alanine. Its pathway is amino-acid biosynthesis; D-alanine biosynthesis; D-alanine from L-alanine: step 1/1. In terms of biological role, catalyzes the interconversion of L-alanine and D-alanine. May also act on other amino acids. This Methylobacterium nodulans (strain LMG 21967 / CNCM I-2342 / ORS 2060) protein is Alanine racemase (alr).